A 333-amino-acid chain; its full sequence is Arylacetonitrilase (333 aa).

The CN hydrolase domain maps to 9-284 (VRVAVTQAEP…EGIIYADLEM (276 aa)). Residue Glu49 is the Proton acceptor of the active site. Lys129 is an active-site residue. Cys164 acts as the Nucleophile in catalysis.

It belongs to the carbon-nitrogen hydrolase superfamily. Nitrilase family.

It catalyses the reaction a nitrile + 2 H2O = a carboxylate + NH4(+). The catalysed reaction is 4-chlorophenylacetonitrile + 2 H2O = 4-chlorophenylacetate + NH4(+). Functionally, nitrilase that hydrolyzes preferentially phenylacetonitrile, (R,S)-mandelonitrile, and 3-indolylacetonitrile. The sequence is that of Arylacetonitrilase from Aspergillus oryzae (strain ATCC 42149 / RIB 40) (Yellow koji mold).